The primary structure comprises 780 residues: Potassium/sodium hyperpolarization-activated cyclic nucleotide-gated channel 3 (780 aa).

The segment at 1–47 (MEEEARPAVGDGEAATPARETPPAAPAQARAASGGVPESAPEPKRRQ) is disordered. Residues 1–96 (MEEEARPAVG…PYSDFRFYWD (96 aa)) lie on the Cytoplasmic side of the membrane. Residues 13-32 (EAATPARETPPAAPAQARAA) are compositionally biased toward low complexity. Positions 45-90 (RRQLGTLLQPTVNKFSLRVFGSHKAVEIEQERVKSAGAWIIHPYSD) are involved in subunit assembly. A helical transmembrane segment spans residues 97–117 (LIMLLLMVGNLIVLPVGITFF). Topologically, residues 118–123 (KEENSP) are extracellular. The helical transmembrane segment at 124 to 144 (PWIVFNVLSDTFFLLDLVLNF) threads the bilayer. Topologically, residues 145 to 170 (RTGIVVEEGAEILLAPRAIRTRYLRT) are cytoplasmic. A helical membrane pass occupies residues 171–191 (WFLVDLISSIPVDYIFLVVEL). Over 192-200 (EPRLDAEVY) the chain is Extracellular. A helical; Voltage-sensor membrane pass occupies residues 201–221 (KTARALRIVRFTKILSLLRLL). Topologically, residues 222–252 (RLSRLIRYMHQWEEIFHMTYDLASAVVRIFN) are cytoplasmic. Residues 253 to 273 (LIGMMLLLCHWDGCLQFLVPM) traverse the membrane as a helical segment. At 274–296 (LQDFPSDCWVSMNRMVNHSWGRQ) the chain is on the extracellular side. N-linked (GlcNAc...) asparagine glycosylation is present at N290. The pore-forming intramembrane region spans 297 to 318 (YSHALFKAMSHMLCIGYGQQAP). Topologically, residues 319 to 328 (VGMPDVWLTM) are extracellular. A helical membrane pass occupies residues 329–349 (LSMIVGATCYAMFIGHATALI). Residues 350–780 (QSLDSSRRQY…PRGPQISANM (431 aa)) are Cytoplasmic-facing. The tract at residues 353–780 (DSSRRQYQEK…PRGPQISANM (428 aa)) is interaction with KCTD3. 3',5'-cyclic AMP contacts are provided by G491, E492, C494, R501, T502, R542, and R545. A disordered region spans residues 549–569 (KNSILQRKRSEPSPGSSSGGV). S634 carries the phosphoserine modification. Residues 687–698 (ASLSRTGRSQVS) show a composition bias toward polar residues. The segment at 687–780 (ASLSRTGRSQ…PRGPQISANM (94 aa)) is disordered.

The protein belongs to the potassium channel HCN family. As to quaternary structure, homotetramer. The potassium channel is composed of a homo- or heterotetrameric complex of pore-forming subunits. Interacts with HCN1. Interacts with KCTD3; this interaction increases cell surface expression and current density of this channel. Interacts with PEX5L.

The protein localises to the cell membrane. The catalysed reaction is K(+)(in) = K(+)(out). It carries out the reaction Na(+)(in) = Na(+)(out). Its activity is regulated as follows. Inhibited by Cs(1+) and ivabradine. Unlike HCN2 and HCN4, HCN3 is insensitive to cyclic nucleotides, such as cAMP or cGMP. This lack of sensitivity of HCN3, despite harboring a functional cyclic nucleotide-binding domain (CNBD), may be explained by its shorter C-terminal sequence, which may alter the normal autoinhibition of the channel. Phosphatidylinositol-4,5-bisphosphate (PIP(2)) shifts HCN3 activation to more depolarized potentials and accelerated activation kinetics. Its function is as follows. Hyperpolarization-activated ion channel that are permeable to sodium and potassium ions, with an about 3:1 preference for potassium ions. Contributes to the native pacemaker currents in heart (If) and in neurons (Ih). In particular, plays a pivotal role in maintaining excitability and promoting rhythmic burst firing within hypothalamic nuclei. Exerts a significant influence on the configuration of the cardiac action potential waveform. Does not appear to play a prominent role in the processing of acute, neuropathic, or inflammatory pain. This chain is Potassium/sodium hyperpolarization-activated cyclic nucleotide-gated channel 3 (Hcn3), found in Rattus norvegicus (Rat).